A 204-amino-acid chain; its full sequence is Fruiting body protein SC7 (204 aa).

The N-terminal stretch at M1–A16 is a signal peptide. Residues L62–Y185 enclose the SCP domain. N80, N118, and N134 each carry an N-linked (GlcNAc...) asparagine glycan.

The protein belongs to the CRISP family.

It localises to the secreted. In Schizophyllum commune (Split gill fungus), this protein is Fruiting body protein SC7 (SC7).